The chain runs to 155 residues: Ribosomal RNA large subunit methyltransferase H (155 aa).

S-adenosyl-L-methionine contacts are provided by residues L73, G104, and 123-128 (LSPLTL).

This sequence belongs to the RNA methyltransferase RlmH family. In terms of assembly, homodimer.

Its subcellular location is the cytoplasm. The catalysed reaction is pseudouridine(1915) in 23S rRNA + S-adenosyl-L-methionine = N(3)-methylpseudouridine(1915) in 23S rRNA + S-adenosyl-L-homocysteine + H(+). In terms of biological role, specifically methylates the pseudouridine at position 1915 (m3Psi1915) in 23S rRNA. The chain is Ribosomal RNA large subunit methyltransferase H from Pseudomonas entomophila (strain L48).